Consider the following 713-residue polypeptide: MALQASSSPSMFRAIPTNTNASCRRKLQVRASAAAAAANGGGDGKVMMRKEAASGAWKIDYSGEKPATPLLDTVNYPVHMKNLSTPELEQLAAELRAEIVHTVSKTGGHLSSSLGVVELAVALHHVFDTPEDKIIWDVGHQAYPHKILTGRRSRMHTIRQTSGLAGFPKRDESAHDAFGAGHSSTSISAALGMAVARDLLGKKNHVISVIGDGAMTAGQAYEAMNNSGYLDSNMIVVLNDNKQVSLPTATLDGPATPVGALSKALTKLQSSTKLRRLREAAKTVTKQIGGQAHEVAAKVDEYARGMVSASGSTLFEELGLYYIGPVDGHSVDDLVAIFNKVKSMPAPGPVLVHIVTEKGKGYPPAEAAADRMHGVVKFDPTTGRQFKSKCSTLSYTQYFAEALIREAEADDKVVGIHAAMGGGTGLNYFHKRFPERCFDVGIAEQHAVTFAAGLAAEGLKPFCAIYSSFLQRGYDQVVHDVDLQRLPVRFAMDRAGLVGADGPTHCGAFDVAYMACLPNMVVMAPADEAELMHMVATAAAIDDRPSCFRFPRGNGIGAVLPPNHKGTPLEVGKGRVLVGGNRVALLGYGTMVQACMKAAEALKEHGIYVTVADARFCKPLDTGLIRELAAEHEVLVTVEEGSIGGFGSHVAHYLSLSGLLDGPLKLRSMFLPDRYIDHGAPVDQLEEAGLTPRHIAATVLSLLGRPLEALQLS.

The transit peptide at 1-30 (MALQASSSPSMFRAIPTNTNASCRRKLQVR) directs the protein to the chloroplast. Residues His140 and 181-183 (GHS) each bind thiamine diphosphate. A Mg(2+)-binding site is contributed by Asp212. Thiamine diphosphate contacts are provided by residues 213–214 (GA), Asn241, Tyr362, and Glu444. Asn241 is a binding site for Mg(2+).

The protein belongs to the transketolase family. DXPS subfamily. In terms of assembly, homodimer. The cofactor is Mg(2+). It depends on thiamine diphosphate as a cofactor.

It is found in the plastid. Its subcellular location is the chloroplast. The enzyme catalyses D-glyceraldehyde 3-phosphate + pyruvate + H(+) = 1-deoxy-D-xylulose 5-phosphate + CO2. It participates in metabolic intermediate biosynthesis; 1-deoxy-D-xylulose 5-phosphate biosynthesis; 1-deoxy-D-xylulose 5-phosphate from D-glyceraldehyde 3-phosphate and pyruvate: step 1/1. Functionally, catalyzes the acyloin condensation reaction between C atoms 2 and 3 of pyruvate and glyceraldehyde 3-phosphate to yield 1-deoxy-D-xylulose-5-phosphate (DXP). Is a limiting enzyme for plastidic isoprenoid biosynthesis and essential for chloroplast development. The protein is Probable 1-deoxy-D-xylulose-5-phosphate synthase 2, chloroplastic of Oryza sativa subsp. japonica (Rice).